The chain runs to 84 residues: Sulfur carrier protein TusA (84 aa).

Cysteine 19 acts as the Cysteine persulfide intermediate in catalysis.

It belongs to the sulfur carrier protein TusA family. Interacts with IscS.

The protein localises to the cytoplasm. It functions in the pathway tRNA modification. In terms of biological role, sulfur carrier protein involved in sulfur trafficking in the cell. Part of a sulfur-relay system required for 2-thiolation during synthesis of 2-thiouridine of the modified wobble base 5-methylaminomethyl-2-thiouridine (mnm(5)s(2)U) in tRNA. Interacts with IscS and stimulates its cysteine desulfurase activity. Accepts an activated sulfur from IscS, which is then transferred to TusD, and thus determines the direction of sulfur flow from IscS to 2-thiouridine formation. Also appears to be involved in sulfur transfer for the biosynthesis of molybdopterin. In Proteus mirabilis (strain HI4320), this protein is Sulfur carrier protein TusA.